A 434-amino-acid chain; its full sequence is Pancreatic lipase-related protein 2 (434 aa).

Cys-4 and Cys-10 form a disulfide bridge. The segment at 76-88 (IHGFTDSGENSWL) is required for galactolipase activity. A disulfide bond links Cys-92 and Cys-103. Catalysis depends on Ser-154, which acts as the Nucleophile. Residue Asp-178 is the Charge relay system of the active site. Ca(2+) contacts are provided by Glu-189, Arg-192, Asp-194, and Asp-197. The cysteines at positions 239 and 245 are disulfide-linked. Positions 240 to 244 (KTGIS) are required for galactolipase activity. The active-site Charge relay system is His-247. 2 cysteine pairs are disulfide-bonded: Cys-269–Cys-280 and Cys-283–Cys-288. N-linked (GlcNAc...) asparagine glycosylation is present at Asn-318. The PLAT domain occupies 322–434 (WRYKVTVTLS…ENVEQTLSPC (113 aa)). A disulfide bond links Cys-418 and Cys-434.

It belongs to the AB hydrolase superfamily. Lipase family. Pancreas.

It is found in the secreted. Its subcellular location is the zymogen granule membrane. The protein resides in the cell projection. The protein localises to the neuron projection. The enzyme catalyses a triacylglycerol + H2O = a diacylglycerol + a fatty acid + H(+). It catalyses the reaction a 1,2-diacyl-3-O-(beta-D-galactosyl)-sn-glycerol + 2 H2O = 3-beta-D-galactosyl-sn-glycerol + 2 a fatty acid + 2 H(+). It carries out the reaction 1,2,3-tri-(9Z-octadecenoyl)-glycerol + H2O = di-(9Z)-octadecenoylglycerol + (9Z)-octadecenoate + H(+). The catalysed reaction is di-(9Z)-octadecenoylglycerol + H2O = (9Z-octadecenoyl)-glycerol + (9Z)-octadecenoate + H(+). The enzyme catalyses (9Z-octadecenoyl)-glycerol + H2O = glycerol + (9Z)-octadecenoate + H(+). It catalyses the reaction 1-(9Z-octadecenoyl)-glycerol + H2O = glycerol + (9Z)-octadecenoate + H(+). It carries out the reaction 1,2,3-tripropanoylglycerol + H2O = dipropanoylglycerol + propanoate + H(+). The catalysed reaction is 1,2,3-tributanoylglycerol + H2O = dibutanoylglycerol + butanoate + H(+). The enzyme catalyses 1,2,3-trioctanoylglycerol + H2O = dioctanoylglycerol + octanoate + H(+). It catalyses the reaction 1,2-didecanoylglycerol + H2O = decanoylglycerol + decanoate + H(+). It carries out the reaction long chain 1,2-diacyl-3-O-beta-D-galactosyl-sn-glycerol + H2O = long chain acyl-3-O-beta-D-galactosyl-sn-glycerol + a fatty acid + H(+). The catalysed reaction is 1,2-dioctanoyl-3-O-beta-D-galactosyl-sn-glycerol + H2O = octanoyl-3-(beta-D-galactosyl)-sn-glycerol + octanoate + H(+). The enzyme catalyses 1,2-didodecanoyl-3-beta-D-galactosyl-sn-glycerol + H2O = dodecanoyl-3-beta-D-galactosyl-sn-glycerol + dodecanoate + H(+). It catalyses the reaction 1-beta-D-galactosyl-2,3-didodecanoyl-sn-glycerol + H2O = 1-beta-D-galactosyl-dodecanoyl-sn-glycerol + dodecanoate + H(+). It carries out the reaction a 1,2-diacyl-3-O-[alpha-D-galactosyl-(1-&gt;6)-beta-D-galactosyl]-sn-glycerol + H2O = acyl-3-O-[alpha-D-galactosyl-(1-&gt;6)-beta-D-galactosyl]-sn-glycerol + a fatty acid + H(+). The catalysed reaction is long chain 1,2-diacyl-3-O-[alpha-D-galactosyl-(1-&gt;6)-beta-D-galactosyl]-sn-glycerol + H2O = long chain acyl-3-O-[alpha-D-galactosyl-(1-&gt;6)-beta-D-galactosyl]-sn-glycerol + a fatty acid + H(+). The enzyme catalyses 1,2-dioctanoyl-3-O-[alpha-D-galactosyl-(1-&gt;6)-beta-D-galactosyl]-sn-glycerol + H2O = octanoyl-3-O-[alpha-D-galactosyl-(1-&gt;6)-beta-D-galactosyl]-sn-glycerol + octanoate + H(+). It catalyses the reaction 1,2-didodecanoyl-3-O-[alpha-D-galactosyl-(1-&gt;6)-beta-D-galactosyl]-sn-glycerol + H2O = dodecanoyl-3-O-[alpha-D-galactosyl-(1-&gt;6)-beta-D-galactosyl]-sn-glycerol + dodecanoate + H(+). It carries out the reaction a 1,2-diacyl-sn-glycero-3-phosphocholine + H2O = a monoacyl-sn-glycero-3-phosphocholine + a fatty acid + H(+). It participates in glycerolipid metabolism; triacylglycerol degradation. Its pathway is glycolipid metabolism. CLPS stimulates triacylglycerol lipase activity. Not inhibited by bile salts. Lipase that primarily hydrolyzes triglycerides and galactosylglycerides. In neonates, may play a major role in pancreatic digestion of dietary fats such as milk fat globules enriched in long-chain triglycerides. Hydrolyzes short-, medium- and long-chain fatty acyls in triglycerides without apparent positional specificity. Can completely deacylate triacylglycerols. When the liver matures and bile salt synthesis increases, likely functions mainly as a galactolipase and monoacylglycerol lipase. Hydrolyzes monogalactosyldiglycerols (MGDG) and digalactosyldiacylglycerols (DGDG) present in a plant-based diet, releasing long-chain polyunsaturated fatty acids. Hydrolyzes medium- and long-chain fatty acyls in galactolipids. May act together with LIPF to hydrolyze partially digested triglycerides. Hydrolyzes long-chain monoglycerides with high efficiency. In cytotoxic T cells, contributes to perforin-dependent cell lysis, but is unlikely to mediate direct cytotoxicity. Also has low phospholipase activity. In neurons, required for the localization of the phospholipid 1-oleoyl-2-palmitoyl-PC (OPPC) to neurite tips through acyl chain remodeling of membrane phospholipids. The resulting OPPC-rich lipid membrane domain recruits the t-SNARE protein STX4 by selectively interacting with the STX4 transmembrane domain and this promotes surface expression of the dopamine transporter SLC6A3/DAT at neurite tips by facilitating fusion of SLC6A3-containing transport vesicles with the plasma membrane. This is Pancreatic lipase-related protein 2 from Cavia porcellus (Guinea pig).